A 114-amino-acid chain; its full sequence is Large ribosomal subunit protein bL17 (114 aa).

This sequence belongs to the bacterial ribosomal protein bL17 family. As to quaternary structure, part of the 50S ribosomal subunit. Contacts protein L32.

This is Large ribosomal subunit protein bL17 from Clostridium acetobutylicum (strain ATCC 824 / DSM 792 / JCM 1419 / IAM 19013 / LMG 5710 / NBRC 13948 / NRRL B-527 / VKM B-1787 / 2291 / W).